The primary structure comprises 266 residues: Phosphoethanolamine N-methyltransferase (266 aa).

Residue Gln-18 participates in phosphoethanolamine binding. Tyr-19 is an active-site residue. Tyr-27 lines the phosphoethanolamine pocket. S-adenosyl-L-methionine-binding residues include Ile-36, Ser-37, Gly-63, Asp-85, Ile-86, Asp-110, Ile-111, and Arg-127. Residue His-132 is part of the active site. Phosphoethanolamine is bound by residues Tyr-160, Tyr-175, Arg-179, Tyr-181, and Lys-247.

Belongs to the class I-like SAM-binding methyltransferase superfamily. PEAMT family. Monomer.

The protein resides in the golgi apparatus membrane. It is found in the cytoplasm. It catalyses the reaction phosphoethanolamine + S-adenosyl-L-methionine = N-methylethanolamine phosphate + S-adenosyl-L-homocysteine + H(+). The catalysed reaction is N-methylethanolamine phosphate + S-adenosyl-L-methionine = N,N-dimethylethanolamine phosphate + S-adenosyl-L-homocysteine + H(+). The enzyme catalyses N,N-dimethylethanolamine phosphate + S-adenosyl-L-methionine = phosphocholine + S-adenosyl-L-homocysteine + H(+). It functions in the pathway phospholipid metabolism; phosphatidylcholine biosynthesis; phosphocholine from phosphoethanolamine. With respect to regulation, inhibited by phosphocholine. Inhibited by hexadecylphosphocholine (miltefosine). Inhibited by S-adenosyl-l-homocysteine. Weakly inhibited in vitro by amodiaquine, chloroquine and primaquine. Inhibited by NSC-158011. Its function is as follows. Catalyzes N-methylation of phosphoethanolamine, phosphomonomethylethanolamine and phosphodimethylethanolamine, the three methylation steps required to convert phosphoethanolamine to phosphocholine. Has no ethanolamine- or phosphatidylethanolamine-N-methyltransferase activity. Required for gametocyte development, maturation and transmission to mosquitoes and for oocyst formation in the mosquito midgut. In Plasmodium falciparum (isolate 3D7), this protein is Phosphoethanolamine N-methyltransferase.